A 475-amino-acid polypeptide reads, in one-letter code: MSPQTETKASVGFKAGVKDYKLTYYTPEYETKDTDILAAFRVTPQPGVPPEEAGAAVAAESSTGTWTTVWTDGLTSLDRYKGRCYGIEPVAGEENQYIAYVAYPLDLFEEGSVTNMFTSIVGNVFGFKALRALRLEDLRIPTAYIKTFQGPPHGIQVERDKLNKYGRPLLGCTIKPKLGLSAKNYGRAVYECLRGGLDFTKDDENVNSQPFMRWRDRFLFCAEAIFKSQAETGEIKGHYLNATAGTCEEMMKRAIFARELGAPIVMHDYLTGGFTANTSLAHYCRDNGLLLHIHRAMHAVIDRQKNHGMHFRVLAKALRMSGGDHIHAGTVVGKLEGEREITLGFVDLLRDDFVEKDRSRGIYFTQDWVSLPGVLPVASGGIHVWHMPALTEIFGDDSVLQFGGGTLGHPWGNAPGAVANRVALEACVQARNEGRDLAREGNEIIREASKWSPELAAACEVWKEIKFEFEAMDTL.

A propeptide spanning residues 1-2 (MS) is cleaved from the precursor. At proline 3 the chain carries N-acetylproline. Lysine 14 is modified (N6,N6,N6-trimethyllysine). Asparagine 123 and threonine 173 together coordinate substrate. Lysine 175 acts as the Proton acceptor in catalysis. Lysine 177 is a binding site for substrate. The Mg(2+) site is built by lysine 201, aspartate 203, and glutamate 204. Lysine 201 carries the N6-carboxylysine modification. The Proton acceptor role is filled by histidine 294. Residues arginine 295, histidine 327, and serine 379 each contribute to the substrate site.

This sequence belongs to the RuBisCO large chain family. Type I subfamily. In terms of assembly, heterohexadecamer of 8 large chains and 8 small chains; disulfide-linked. The disulfide link is formed within the large subunit homodimers. It depends on Mg(2+) as a cofactor. The disulfide bond which can form in the large chain dimeric partners within the hexadecamer appears to be associated with oxidative stress and protein turnover.

Its subcellular location is the plastid. The protein localises to the chloroplast. It catalyses the reaction 2 (2R)-3-phosphoglycerate + 2 H(+) = D-ribulose 1,5-bisphosphate + CO2 + H2O. It carries out the reaction D-ribulose 1,5-bisphosphate + O2 = 2-phosphoglycolate + (2R)-3-phosphoglycerate + 2 H(+). In terms of biological role, ruBisCO catalyzes two reactions: the carboxylation of D-ribulose 1,5-bisphosphate, the primary event in carbon dioxide fixation, as well as the oxidative fragmentation of the pentose substrate in the photorespiration process. Both reactions occur simultaneously and in competition at the same active site. This is Ribulose bisphosphate carboxylase large chain (rbcL) from Cucumis sativus (Cucumber).